We begin with the raw amino-acid sequence, 951 residues long: Metal transporter CNNM1 (951 aa).

Residues 23 to 43 form a helical membrane-spanning segment; sequence AVLLLFFSLSPRPPAAAAWLL. The tract at residues 114 to 138 is disordered; sequence GAGGAAPSAVPTRPPGPQRCREQSD. Residues 218 to 414 form the CNNM transmembrane domain; that stretch reads LLPPAWLRAL…DPYSDLVKEE (197 aa). A run of 3 helical transmembrane segments spans residues 222–242, 282–302, and 319–339; these read AWLRALGALLLLALSALFSGL, LLCTLLLGQAGANAALAGWLY, and AGVHFPWLPALVCTGAVFLGA. CBS domains follow at residues 433–495 and 502–568; these read LTPL…CTPL and YNRP…ILDE. 2 stretches are compositionally biased toward polar residues: residues 731 to 740 and 814 to 824; these read SRCSGLNRSE and KAPTTRGTPQT. 2 disordered regions span residues 731 to 754 and 795 to 830; these read SRCSGLNRSESPNRERSDFGGSNT and MDSSPQSPDMEAFTDGDSTKAPTTRGTPQTPKDDPV. Phosphothreonine is present on residues threonine 821 and threonine 824. Serine 850 carries the phosphoserine modification. Positions 903-951 are disordered; it reads DPEASPCSSDSEENMGKKLLRTLSGRKRKKSADGERASEENSNLTPLIT. Over residues 920-932 the composition is skewed to basic residues; sequence KLLRTLSGRKRKK. The span at 942–951 shows a compositional bias: polar residues; it reads ENSNLTPLIT.

Belongs to the ACDP family. In terms of tissue distribution, predominantly expressed in brain and testis, and, at lower levels, in kidney. In the brain, expressed in hippocampal neurons (at protein level).

The protein localises to the cell membrane. Probable metal transporter. This Mus musculus (Mouse) protein is Metal transporter CNNM1 (Cnnm1).